The following is a 378-amino-acid chain: MGFSFDWDDIFQYSTVKIVRIRDRRLGILHLSFLVGIVAYIVVYSAIIKKGYLFTEVPIGSVRTSLKGPNTFASNLTYCSNQQHNGSTYPFTPLECNYWDEQLALFPVGQDSTFTCTTRVRLSKQEANCNFTDPTCKFVDEPGSAKNIYIADIESFTILIDHTMYASSSGSQFNAVDLHGYILNQDGDEVQIDANGTSIGVSGKPDIMTIGQLLSFGGVSLDQASPVDSNVSIRYDGVVLFVFITYSNTYTYSTSDFKYVYSVQQIANTIYDVPETIILESIHSRLLYKRHGIRVIFIQTGTIGSFHFQTLLLTLVSGLGLLAVATTVVDQLAIRLLPQRKSYSSLKFQVTESMSNPMKKRITTDEGEDVLYTRIEGL.

Topologically, residues Met-1–Gly-27 are cytoplasmic. A helical transmembrane segment spans residues Ile-28–Ile-48. The Lumenal segment spans residues Lys-49–His-307. Residues Arg-290–Ile-303 are pore-forming motif. A helical transmembrane segment spans residues Phe-308–Val-328. Residues Val-329 to Leu-378 lie on the Cytoplasmic side of the membrane.

The protein belongs to the P2X receptor family.

Its subcellular location is the contractile vacuole membrane. In terms of biological role, P2X receptors are ATP-gated ion channels that play a role in intracellular calcium signaling. Not required for the purinergic response to extracellular nucleotides. Inward currents evoked by intracellular ATP and ATP analogs. Exclusively selective for ATP over other nucleotides. Insensitive to P2 receptor antagonists PPADS, suramin and 2',3'-O-(2,4,6-trinitrophenyl)-ATP but inhibited by nanomolar concentrations of copper and sodium ion. More permeable to ammonium than either sodium or potassium ions and less permeable to choline. It has been reported that p2xA is not essential for osmoregulation, however this information is in contradiction with another source which indicates that p2xA is required for osmoregulation. Found to be permeable to chloride ions. Inhibited by copper and sodium ions. The polypeptide is P2X receptor A (p2xA) (Dictyostelium discoideum (Social amoeba)).